A 201-amino-acid chain; its full sequence is Female-specific protein transformer (201 aa).

The interval 1–117 (MDADSSSRSP…RSRSRSRTPR (117 aa)) is disordered. Residues 9–37 (SPRDTRTCARPKEKVPYFADEGRERDRVR) are compositionally biased toward basic and acidic residues. Basic residues-rich tracts occupy residues 38-62 (NLRH…RARS) and 99-115 (KQRR…RSRT).

Its subcellular location is the nucleus speckle. Functionally, member of the regulatory pathway controlling female somatic sexual differentiation, regulated by Sxl. Activates dsx female-specific splicing by promoting the formation of a splicing enhancer complex which consists of tra, tra2 and sr proteins. This Drosophila hydei (Fruit fly) protein is Female-specific protein transformer (tra).